The sequence spans 768 residues: Post-transcriptional regulator MKT1 (768 aa).

It belongs to the XPG/RAD2 endonuclease family. Interacts with PBP1.

The protein resides in the cytoplasm. The protein localises to the cytosol. Functionally, involved in 3'-UTR mediated RNA regulation. Complexes with PBP1 to promote mRNA interactions with poly(A)-binding protein. The chain is Post-transcriptional regulator MKT1 from Cryptococcus neoformans var. grubii serotype A (strain H99 / ATCC 208821 / CBS 10515 / FGSC 9487) (Filobasidiella neoformans var. grubii).